The primary structure comprises 1252 residues: DNA-directed RNA polymerase subunit beta (1252 aa).

It belongs to the RNA polymerase beta chain family. As to quaternary structure, the RNAP catalytic core consists of 2 alpha, 1 beta, 1 beta' and 1 omega subunit. When a sigma factor is associated with the core the holoenzyme is formed, which can initiate transcription.

The enzyme catalyses RNA(n) + a ribonucleoside 5'-triphosphate = RNA(n+1) + diphosphate. Functionally, DNA-dependent RNA polymerase catalyzes the transcription of DNA into RNA using the four ribonucleoside triphosphates as substrates. The sequence is that of DNA-directed RNA polymerase subunit beta from Chlamydia trachomatis serovar L2 (strain ATCC VR-902B / DSM 19102 / 434/Bu).